Consider the following 565-residue polypeptide: Amino-acid acetyltransferase, mitochondrial (565 aa).

Residues aspartate 38–asparagine 58 form a disordered region. Residues leucine 352 to valine 540 form the N-acetyltransferase domain.

The protein belongs to the acetyltransferase family.

It is found in the mitochondrion. The enzyme catalyses L-glutamate + acetyl-CoA = N-acetyl-L-glutamate + CoA + H(+). The protein operates within amino-acid biosynthesis; L-arginine biosynthesis; N(2)-acetyl-L-ornithine from L-glutamate: step 1/4. N-acetylglutamate synthase involved in arginine biosynthesis. The sequence is that of Amino-acid acetyltransferase, mitochondrial (ARG2) from Cryptococcus neoformans var. neoformans serotype D (strain B-3501A) (Filobasidiella neoformans).